We begin with the raw amino-acid sequence, 141 residues long: Hemoglobin subunit alpha-D (141 aa).

The Globin domain occupies 1–141; that stretch reads MLTEDDKQLI…VSAVLAEKYR (141 aa). Positions 58 and 87 each coordinate heme b.

Belongs to the globin family. Heterotetramer of two alpha-D chains and two beta chains. As to expression, red blood cells.

In terms of biological role, involved in oxygen transport from the lung to the various peripheral tissues. This Chelonoidis niger (Galapagos giant tortoise) protein is Hemoglobin subunit alpha-D (HBAD).